Consider the following 2629-residue polypeptide: Telomerase protein component 1 (2629 aa).

4 TEP1 N-terminal repeats span residues 1–30 (MEKL…DLQP), 31–60 (LEKI…DLQP), 61–90 (TERI…DLQP), and 91–120 (LEKL…TVKS). In terms of domain architecture, TROVE spans 227-685 (LKLTSGDSGF…VKHNLSPMPG (459 aa)). Residues 386-397 (PRKHRSKRRSRQ) are compositionally biased toward basic residues. Residues 386–412 (PRKHRSKRRSRQPPRPQKTERPFSERG) form a disordered region. A compositionally biased stretch (basic and acidic residues) spans 402–412 (QKTERPFSERG). Residues 1171-1578 (RLSLVTGQAG…EFLTNLHVVA (408 aa)) form the NACHT domain. Residue 1177 to 1184 (GQAGQGKT) coordinates ATP. WD repeat units follow at residues 1420-1462 (VLPQ…EVLA), 1681-1720 (TMSS…EEKA), 1723-1761 (SGCD…WVFQ), 1764-1803 (AHQY…LAFQ), 1805-1844 (THPK…VTKE), 1847-1886 (APGP…RLAA), 1889-1930 (AQCG…GCLG), 1932-1971 (LPLS…QGPQ), 1974-2013 (ELNV…HSLW), 2015-2054 (LSRY…QPHV), 2067-2106 (GHEG…APLL), 2113-2151 (CHRD…QLGQ), 2154-2191 (GHQS…LTSI), 2193-2241 (AHSG…QIRT), 2244-2282 (GHSG…DDSY), 2285-2324 (RSSV…ATAQ), 2326-2362 (PGRV…GSTS), 2375-2424 (EDWG…SSIL), 2467-2507 (PNGS…GEWI), 2555-2592 (IHLG…LLGL), and 2594-2628 (RCEG…FLSW).

As to quaternary structure, associated component of the telomerase holoenzyme complex. Component of the vault ribonucleoprotein particle, at least composed of MVP, PARP4 and one or more vault RNAs (vRNAs). Binds to VAULTRC1, VAULTRC2 and VAULTRC4/hvg4 vRNAs. As to expression, ubiquitous.

The protein localises to the nucleus. It localises to the chromosome. It is found in the telomere. Component of the telomerase ribonucleoprotein complex that is essential for the replication of chromosome termini. Also a component of the ribonucleoprotein vaults particle, a multi-subunit structure involved in nucleo-cytoplasmic transport. Responsible for the localizing and stabilizing vault RNA (vRNA) association in the vault ribonucleoprotein particle. This Mus musculus (Mouse) protein is Telomerase protein component 1 (Tep1).